A 314-amino-acid chain; its full sequence is Homoserine kinase (314 aa).

95–105 contacts ATP; the sequence is PHSRGLGSSAS.

This sequence belongs to the GHMP kinase family. Homoserine kinase subfamily.

The protein resides in the cytoplasm. It carries out the reaction L-homoserine + ATP = O-phospho-L-homoserine + ADP + H(+). The protein operates within amino-acid biosynthesis; L-threonine biosynthesis; L-threonine from L-aspartate: step 4/5. Catalyzes the ATP-dependent phosphorylation of L-homoserine to L-homoserine phosphate. In Rhodococcus opacus (strain B4), this protein is Homoserine kinase.